The primary structure comprises 152 residues: UPF0266 membrane protein KPN78578_23010 (152 aa).

The next 3 membrane-spanning stretches (helical) occupy residues 6–26, 45–65, and 67–87; these read LVII…QFIM, VDGM…ITQH, and TAIT…LFWI.

The protein belongs to the UPF0266 family.

It localises to the cell inner membrane. In Klebsiella pneumoniae subsp. pneumoniae (strain ATCC 700721 / MGH 78578), this protein is UPF0266 membrane protein KPN78578_23010.